Reading from the N-terminus, the 348-residue chain is Protein-glutamate methylesterase/protein-glutamine glutaminase 2 (348 aa).

The 118-residue stretch at 5–122 (KVLIIDDSAL…DLGLSQYRDE (118 aa)) folds into the Response regulatory domain. Residue Asp56 is modified to 4-aspartylphosphate. Positions 157–348 (SLKTGFLCAI…AANIIKHALK (192 aa)) constitute a CheB-type methylesterase domain. Catalysis depends on residues Ser169, His195, and Asp291.

Belongs to the CheB family. Phosphorylated by CheA. Phosphorylation of the N-terminal regulatory domain activates the methylesterase activity.

It localises to the cytoplasm. It catalyses the reaction [protein]-L-glutamate 5-O-methyl ester + H2O = L-glutamyl-[protein] + methanol + H(+). The catalysed reaction is L-glutaminyl-[protein] + H2O = L-glutamyl-[protein] + NH4(+). Involved in chemotaxis. Part of a chemotaxis signal transduction system that modulates chemotaxis in response to various stimuli. Catalyzes the demethylation of specific methylglutamate residues introduced into the chemoreceptors (methyl-accepting chemotaxis proteins or MCP) by CheR. Also mediates the irreversible deamidation of specific glutamine residues to glutamic acid. In Saccharophagus degradans (strain 2-40 / ATCC 43961 / DSM 17024), this protein is Protein-glutamate methylesterase/protein-glutamine glutaminase 2.